The following is a 734-amino-acid chain: MAPPAKRAKRGWVPPGYKYLGPGNSLDQGEPTNPSDAAAKEHDEAYDQYIKSGKNPYLYFSPADQRFIDQTKDAKDWGGKVGHYFFRTKRAFAPKLSTDSEPGTSGVSRPGKRTKPPAHIFVNQARAKKKRASLAAQQRTLTMSDGTETNQPDTGIANARVERSADGGGSSGGGGSGGGGIGVSTGTYDNQTTYKFLGDGWVEITAHASRLLHLGMPPSENYCRVTVHNNQTTGHGTKVKGNMAYDTHQQIWTPWSLVDANAWGVWFQPSDWQFIQNSMESLNLDSLSQELFNVVVKTVTEQQGAGQDAIKVYNNDLTACMMVALDSNNILPYTPAAQTSETLGFYPWKPTAPAPYRYYFFMPRQLSVTSSNSAEGTQITDTIGEPQALNSQFFTIENTLPITLLRTGDEFTTGTYIFNTDPLKLTHTWQTNRHLACLQGITDLPTSDTATASLTANGDRFGSTQTQNVNYVTEALRTRPAQIGFMQPHDNFEANRGGPFKVPVVPLDITAGEDHDANGAIRFNYGKQHGEDWAKQGAAPERYTWDAIDSAAGRDTARCFVQSAPISIPPNQNQILQREDAIAGRTNMHYTNVFNSYGPLSAFPHPDPIYPNGQIWDKELDLEHKPRLHVTAPFVCKNNPPGQLFVHLGPNLTDQFDPNSTTVSRIVTYSTFYWKGILKFKAKLRPNLTWNPVYQATTDSVANSYMNVKKWLPSATGNMHSDPLICRPVPHMTY.

Over residues 1-10 (MAPPAKRAKR) the composition is skewed to basic residues. Disordered regions lie at residues 1–42 (MAPP…AKEH), 95–116 (KLST…RTKP), and 134–154 (LAAQ…QPDT). Positions 4–13 (PAKRAKRGWV) match the Nuclear localization signal motif. Positions 19–64 (YLGPGNSLDQGEPTNPSDAAAKEHDEAYDQYIKSGKNPYLYFSPAD) are phospholipase A2-like. 3 stretches are compositionally biased toward polar residues: residues 25–35 (SLDQGEPTNPS), 97–107 (STDSEPGTSGV), and 140–153 (TLTM…NQPD). Residue N328 participates in Mg(2+) binding.

Belongs to the parvoviridae capsid protein family.

The protein localises to the virion. The protein resides in the host nucleus. Its function is as follows. Capsid protein self-assembles to form an icosahedral capsid with a T=1 symmetry, about 22 nm in diameter, and consisting of 60 copies of two size variants of the capsid proteins, VP1 and VP2, which differ by the presence of an N-terminal extension in the minor protein VP1. The capsid encapsulates the genomic ssDNA. Capsid proteins are responsible for the attachment to host cell receptors. This attachment induces virion internalization predominantly through clathrin-dependent endocytosis. Binding to the host receptors also induces capsid rearrangements leading to surface exposure of VP1 N-terminus, specifically its phospholipase A2-like region and putative nuclear localization signal(s). VP1 N-terminus might serve as a lipolytic enzyme to breach the endosomal membrane during entry into host cell and might contribute to virus transport to the nucleus. The protein is Capsid protein VP1 of Cricetidae sp. (Hamster).